We begin with the raw amino-acid sequence, 134 residues long: Small ribosomal subunit protein uS8c (134 aa).

This sequence belongs to the universal ribosomal protein uS8 family. As to quaternary structure, part of the 30S ribosomal subunit.

The protein resides in the plastid. It is found in the chloroplast. One of the primary rRNA binding proteins, it binds directly to 16S rRNA central domain where it helps coordinate assembly of the platform of the 30S subunit. This is Small ribosomal subunit protein uS8c (rps8) from Vitis vinifera (Grape).